The primary structure comprises 1066 residues: Ankyrin repeat protein nuc-2 (1066 aa).

The 166-residue stretch at Met-1 to Ser-166 folds into the SPX domain. 7 ANK repeats span residues Arg-268 to Ser-298, Tyr-336 to Leu-366, Asp-370 to Pro-399, Thr-403 to Ala-432, Glu-435 to Gln-465, Tyr-470 to Ile-499, and Lys-503 to Ala-532. Residues Ile-717–Val-1048 form the GP-PDE domain. Residues Lys-923–Thr-963 are disordered. Positions Ser-946–Arg-962 are enriched in basic and acidic residues.

In terms of biological role, controls phosphorus acquisition. This is Ankyrin repeat protein nuc-2 (nuc-2) from Neurospora crassa (strain ATCC 24698 / 74-OR23-1A / CBS 708.71 / DSM 1257 / FGSC 987).